Here is a 235-residue protein sequence, read N- to C-terminus: Ribonuclease 3 (235 aa).

Positions 11–137 (RAWCAEALGY…VVGALYLDGG (127 aa)) constitute an RNase III domain. Glu51 is a binding site for Mg(2+). Asp55 is an active-site residue. 2 residues coordinate Mg(2+): Asp123 and Glu126. Glu126 is an active-site residue. The 70-residue stretch at 164–233 (DYKTQLQEQL…ARQALMPEHH (70 aa)) folds into the DRBM domain.

Belongs to the ribonuclease III family. Homodimer. Requires Mg(2+) as cofactor.

The protein resides in the cytoplasm. The enzyme catalyses Endonucleolytic cleavage to 5'-phosphomonoester.. Digests double-stranded RNA. Involved in the processing of primary rRNA transcript to yield the immediate precursors to the large and small rRNAs (23S and 16S). Processes some mRNAs, and tRNAs when they are encoded in the rRNA operon. Processes pre-crRNA and tracrRNA of type II CRISPR loci if present in the organism. In Symbiobacterium thermophilum (strain DSM 24528 / JCM 14929 / IAM 14863 / T), this protein is Ribonuclease 3.